Here is a 186-residue protein sequence, read N- to C-terminus: ATP synthase subunit b, chloroplastic (186 aa).

Residues 27-43 traverse the membrane as a helical segment; sequence IFETNILNLAVVLGILL.

The protein belongs to the ATPase B chain family. As to quaternary structure, F-type ATPases have 2 components, F(1) - the catalytic core - and F(0) - the membrane proton channel. F(1) has five subunits: alpha(3), beta(3), gamma(1), delta(1), epsilon(1). F(0) has four main subunits: a(1), b(1), b'(1) and c(10-14). The alpha and beta chains form an alternating ring which encloses part of the gamma chain. F(1) is attached to F(0) by a central stalk formed by the gamma and epsilon chains, while a peripheral stalk is formed by the delta, b and b' chains.

The protein localises to the plastid. The protein resides in the chloroplast thylakoid membrane. In terms of biological role, f(1)F(0) ATP synthase produces ATP from ADP in the presence of a proton or sodium gradient. F-type ATPases consist of two structural domains, F(1) containing the extramembraneous catalytic core and F(0) containing the membrane proton channel, linked together by a central stalk and a peripheral stalk. During catalysis, ATP synthesis in the catalytic domain of F(1) is coupled via a rotary mechanism of the central stalk subunits to proton translocation. Functionally, component of the F(0) channel, it forms part of the peripheral stalk, linking F(1) to F(0). The polypeptide is ATP synthase subunit b, chloroplastic (Mesostigma viride (Green alga)).